Reading from the N-terminus, the 122-residue chain is Ubiquitin-related modifier 1 (122 aa).

Positions proline 33 to aspartate 48 are enriched in polar residues. Residues proline 33 to proline 52 are disordered. 1-thioglycine is present on glycine 122. Glycine 122 is covalently cross-linked (Glycyl lysine isopeptide (Gly-Lys) (interchain with K-? in acceptor proteins)).

It belongs to the URM1 family. Post-translationally, C-terminal thiocarboxylation occurs in 2 steps, it is first acyl-adenylated (-COAMP) via the hesA/moeB/thiF part of UBA4, then thiocarboxylated (-COSH) via the rhodanese domain of UBA4.

The protein resides in the cytoplasm. The protein operates within tRNA modification; 5-methoxycarbonylmethyl-2-thiouridine-tRNA biosynthesis. Acts as a sulfur carrier required for 2-thiolation of mcm(5)S(2)U at tRNA wobble positions of cytosolic tRNA(Lys), tRNA(Glu) and tRNA(Gln). Serves as sulfur donor in tRNA 2-thiolation reaction by being thiocarboxylated (-COSH) at its C-terminus by the MOCS3 homolog UBA4. The sulfur is then transferred to tRNA to form 2-thiolation of mcm(5)S(2)U. Prior mcm(5) tRNA modification by the elongator complex is required for 2-thiolation. Also acts as a ubiquitin-like protein (UBL) that is covalently conjugated via an isopeptide bond to lysine residues of target proteins such as AHP1. The thiocarboxylated form serves as substrate for conjugation and oxidative stress specifically induces the formation of UBL-protein conjugates. The sequence is that of Ubiquitin-related modifier 1 from Laccaria bicolor (strain S238N-H82 / ATCC MYA-4686) (Bicoloured deceiver).